Consider the following 333-residue polypeptide: Uroporphyrinogen decarboxylase (333 aa).

Residues 22-26 (RQAGR), Asp-71, Tyr-145, Ser-200, and His-310 contribute to the substrate site.

This sequence belongs to the uroporphyrinogen decarboxylase family. In terms of assembly, homodimer.

Its subcellular location is the cytoplasm. The enzyme catalyses uroporphyrinogen III + 4 H(+) = coproporphyrinogen III + 4 CO2. It participates in porphyrin-containing compound metabolism; protoporphyrin-IX biosynthesis; coproporphyrinogen-III from 5-aminolevulinate: step 4/4. Functionally, catalyzes the decarboxylation of four acetate groups of uroporphyrinogen-III to yield coproporphyrinogen-III. The sequence is that of Uroporphyrinogen decarboxylase from Thermoplasma acidophilum (strain ATCC 25905 / DSM 1728 / JCM 9062 / NBRC 15155 / AMRC-C165).